Consider the following 255-residue polypeptide: Thiazole synthase (255 aa).

Catalysis depends on Lys96, which acts as the Schiff-base intermediate with DXP. 1-deoxy-D-xylulose 5-phosphate is bound by residues Gly157, 183 to 184, and 205 to 206; these read AG and NS.

The protein belongs to the ThiG family. As to quaternary structure, homotetramer. Forms heterodimers with either ThiH or ThiS.

Its subcellular location is the cytoplasm. The enzyme catalyses [ThiS sulfur-carrier protein]-C-terminal-Gly-aminoethanethioate + 2-iminoacetate + 1-deoxy-D-xylulose 5-phosphate = [ThiS sulfur-carrier protein]-C-terminal Gly-Gly + 2-[(2R,5Z)-2-carboxy-4-methylthiazol-5(2H)-ylidene]ethyl phosphate + 2 H2O + H(+). Its pathway is cofactor biosynthesis; thiamine diphosphate biosynthesis. In terms of biological role, catalyzes the rearrangement of 1-deoxy-D-xylulose 5-phosphate (DXP) to produce the thiazole phosphate moiety of thiamine. Sulfur is provided by the thiocarboxylate moiety of the carrier protein ThiS. In vitro, sulfur can be provided by H(2)S. This is Thiazole synthase from Exiguobacterium sibiricum (strain DSM 17290 / CCUG 55495 / CIP 109462 / JCM 13490 / 255-15).